The sequence spans 232 residues: MSACQSPIIVALDFPTREAALALADQLDPKLCRVKVGKELFTSCAAGIVEILRDKGFEVFLDLKFHDIPNTTAMAVKAAAEMGVWMVNVHCSGGLRMMAACRETLEAFNGPKPLLIGVTVLTSMEREDLAGIGLDIEPQEQVLRLAALAEKAGMDGLVCSAQEAPALKGAHPRLQLVTPGIRPAGSAQDDQRRILTPRQALDAGSDYLVIGRPISQAADPAKALAAIVAELG.

Substrate contacts are provided by residues D13, K35, 62–71 (DLKFHDIPNT), T122, R182, Q191, G211, and R212. K64 serves as the catalytic Proton donor.

Belongs to the OMP decarboxylase family. Type 1 subfamily. In terms of assembly, homodimer.

The catalysed reaction is orotidine 5'-phosphate + H(+) = UMP + CO2. Its pathway is pyrimidine metabolism; UMP biosynthesis via de novo pathway; UMP from orotate: step 2/2. Its function is as follows. Catalyzes the decarboxylation of orotidine 5'-monophosphate (OMP) to uridine 5'-monophosphate (UMP). The chain is Orotidine 5'-phosphate decarboxylase from Pseudomonas paraeruginosa (strain DSM 24068 / PA7) (Pseudomonas aeruginosa (strain PA7)).